The primary structure comprises 237 residues: Ras-related protein Rab-23 (237 aa).

GTP-binding residues include V20, G21, K22, S23, S24, Y38, and T41. A Mg(2+)-binding site is contributed by S23. A Switch 1 motif is present at residues 28–46 (RYCKGIFTKDYKKTIGVDF). Mg(2+) contacts are provided by T41 and D64. Residues 65-84 (TAGQEEFDAITKAYYRGAQA) carry the Switch 2 motif. GTP contacts are provided by G67, N121, K122, D124, S151, V152, and K153. Residues S186 and S187 each carry the phosphoserine modification. A compositionally biased stretch (polar residues) spans 188 to 208 (SNKIGVFNTSGGSHSGQNSGT). The disordered stretch occupies residues 188-237 (SNKIGVFNTSGGSHSGQNSGTLNGGDVINLRPNKQRTKKNRNPFSSCSIP). C234 is subject to Cysteine methyl ester. C234 carries the S-geranylgeranyl cysteine lipid modification. Residues 235–237 (SIP) constitute a propeptide, removed in mature form.

Belongs to the small GTPase superfamily. Rab family. Interacts with SUFU. The cofactor is Mg(2+).

The protein localises to the cell membrane. The protein resides in the cytoplasm. It localises to the cytoplasmic vesicle. Its subcellular location is the autophagosome. It is found in the endosome membrane. The protein localises to the phagosome. The protein resides in the phagosome membrane. It catalyses the reaction GTP + H2O = GDP + phosphate + H(+). With respect to regulation, regulated by guanine nucleotide exchange factors (GEFs) which promote the exchange of bound GDP for free GTP. Regulated by GTPase activating proteins (GAPs) which increase the GTP hydrolysis activity. Inhibited by GDP dissociation inhibitors (GDIs). Its function is as follows. The small GTPases Rab are key regulators of intracellular membrane trafficking, from the formation of transport vesicles to their fusion with membranes. Rabs cycle between an inactive GDP-bound form and an active GTP-bound form that is able to recruit to membranes different set of downstream effectors directly responsible for vesicle formation, movement, tethering and fusion. Together with SUFU, prevents nuclear import of GLI1, and thereby inhibits GLI1 transcription factor activity. Regulates GLI1 in differentiating chondrocytes. Likewise, regulates GLI3 proteolytic processing and modulates GLI2 and GLI3 transcription factor activity. Plays a role in autophagic vacuole assembly, and mediates defense against pathogens, such as S.aureus, by promoting their capture by autophagosomes that then merge with lysosomes. The polypeptide is Ras-related protein Rab-23 (Homo sapiens (Human)).